The following is a 369-amino-acid chain: MPVVTTDAESETGIPKSLSNEPPSETMEEIEHTCPQPRLTLTAPAPFADETNCQCQAPHEKLTIAQARLGTPADRPVRVYADGIFDLFHSGHARALMQAKTLFPNSYLLVGVCSDDLTHKFKGFTVMNEAERYEALRHCRYVDEVIRDAPWTLTPEFLEKHKIDFVAHDDIPYSSAGSDDVYKHIKEAGMFVPTQRTEGISTSDIITRIVRDYDVYARRNLQRGYTAKELNVSFINEKRYRFQNQVDKMKEKVKNVEERSKEFVNRVEEKSHDLIQKWEEKSREFIGNFLELFGPDGAWKQMFQERSSRMLQALSPKQSPVSSPTRSRSPSRSPSPTFSWLPLKTSPPSSPKAASASISSMSEGDEDEK.

The interval 1-27 (MPVVTTDAESETGIPKSLSNEPPSETM) is disordered. Ile-84, Phe-85, His-92, and Lys-122 together coordinate CTP. The phosphocholine site is built by Lys-122 and Trp-151. CTP-binding residues include His-168, Asp-169, Tyr-173, Gln-195, Arg-196, Thr-197, and Ile-200. The tract at residues 309–369 (RMLQALSPKQ…SMSEGDEDEK (61 aa)) is disordered. 7 positions are modified to phosphoserine: Ser-315, Ser-319, Ser-322, Ser-323, Ser-329, Ser-331, and Ser-335. Low complexity predominate over residues 319–339 (SPVSSPTRSRSPSRSPSPTFS). Thr-345 is subject to Phosphothreonine. A phosphoserine mark is found at Ser-346, Ser-349, Ser-350, Ser-355, Ser-360, and Ser-362. The span at 351–362 (PKAASASISSMS) shows a compositional bias: low complexity.

The protein belongs to the cytidylyltransferase family. In terms of assembly, homodimer. Phosphorylated. In terms of processing, extensively phosphorylated. Highly expressed in testis, placenta, brain, ovary, liver and fetal lung. In terms of tissue distribution, expressed in brain, liver and fetal lung.

The protein resides in the cytoplasm. Its subcellular location is the endoplasmic reticulum. It catalyses the reaction phosphocholine + CTP + H(+) = CDP-choline + diphosphate. It functions in the pathway phospholipid metabolism; phosphatidylcholine biosynthesis; phosphatidylcholine from phosphocholine: step 1/2. Its function is as follows. Catalyzes the key rate-limiting step in the CDP-choline pathway for phosphatidylcholine biosynthesis. The protein is Choline-phosphate cytidylyltransferase B (PCYT1B) of Homo sapiens (Human).